The chain runs to 161 residues: Globin CTT-VIIB-4 (161 aa).

Positions 1–16 (MKFFAVLALCIVGAIA) are cleaved as a signal peptide. The 144-residue stretch at 18 to 161 (PLTADEASLV…NTMAVAVAHL (144 aa)) folds into the Globin domain. Heme b is bound by residues histidine 76 and histidine 111.

Belongs to the globin family. As to quaternary structure, homodimer.

This chain is Globin CTT-VIIB-4 (CTT-7B4), found in Chironomus thummi thummi (Midge).